A 1341-amino-acid chain; its full sequence is Pleckstrin homology domain-containing family G member 3 (1341 aa).

Residues 1 to 68 (MPVSTALHQD…PNSNNNSSGW (68 aa)) form a disordered region. The span at 18-29 (SLVSTTSSSGSS) shows a compositional bias: low complexity. Composition is skewed to polar residues over residues 42 to 51 (SEASAQNGTG) and 59 to 68 (PNSNNNSSGW). Residue serine 76 is modified to Phosphoserine. In terms of domain architecture, DH spans 93–272 (YLGRVVREIV…TCVAWYINDM (180 aa)). A PH domain is found at 296 to 394 (DLTTYGELVL…WTHHIKRLIL (99 aa)). Residues serine 433 and serine 502 each carry the phosphoserine modification. The interval 433 to 482 (SQDEVSSHVRQGRRQSEPGHTLFSRATLPSRQQGFEMPGLKGRRKSEPTR) is disordered. Disordered stretches follow at residues 508 to 657 (DFGQ…EFPE) and 684 to 715 (PEGSEDLKPLSSEEEEEEEMEAAQEPESLLPP). Acidic residues-rich tracts occupy residues 529–541 (ELEEEEELVEEEE) and 570–580 (GSEEEEEEEES). Serine 571, serine 694, serine 695, serine 737, serine 759, serine 762, and serine 766 each carry phosphoserine. Over residues 695–707 (SEEEEEEEMEAAQ) the composition is skewed to acidic residues. A disordered region spans residues 775-832 (SIGDSLSNPPTPEVIIGADMVTDNGPSVNGTESPSAGSGCPTEQDRSSCKKKESALST). Residues 798–810 (NGPSVNGTESPSA) show a composition bias toward polar residues. The segment covering 817 to 832 (EQDRSSCKKKESALST) has biased composition (basic and acidic residues). Phosphoserine is present on residues serine 862, serine 899, serine 900, and serine 947. 4 disordered regions span residues 876–930 (SRFN…EFCP), 939–958 (ERMESSERSPRTGSGQSQAN), 1071–1097 (KVTPDQEEQVPSISGLPEEAGELSGGK), and 1117–1162 (HGTS…PFDT). Over residues 939–948 (ERMESSERSP) the composition is skewed to basic and acidic residues. Positions 949-958 (RTGSGQSQAN) are enriched in polar residues. Residues serine 1129, serine 1134, serine 1136, serine 1141, serine 1155, serine 1158, and serine 1201 each carry the phosphoserine modification. Residues 1135-1162 (FSPSAVSPRTTSPGARSSARSPLSPFDT) show a composition bias toward polar residues. 2 disordered regions span residues 1204-1249 (ENIV…LNGG) and 1271-1341 (KGPH…NSVG). Basic and acidic residues predominate over residues 1309-1320 (QPKEHGPRDSAD).

It localises to the cytoplasm. The protein resides in the cytoskeleton. Plays a role in controlling cell polarity and cell motility by selectively binding newly polymerized actin and activating RAC1 and CDC42 to enhance local actin polymerization. This is Pleckstrin homology domain-containing family G member 3 from Mus musculus (Mouse).